The primary structure comprises 121 residues: Non-structural protein 8 (121 aa).

Residues 1 to 15 (MKLLIVFGLLTSVYC) form the signal peptide. An SARS ORF8 Ig-like domain is found at 19-121 (ECSIQECCEN…HDVRVVLDFI (103 aa)). Intrachain disulfides connect cysteine 25–cysteine 90, cysteine 37–cysteine 102, and cysteine 61–cysteine 83.

This is Non-structural protein 8 from Rhinolophus macrotis (Big-eared horseshoe bat).